The following is a 64-amino-acid chain: UPF0370 protein YE1145 (64 aa).

Residues 3–23 (WLADYWWVVLIILVGMILNGI) traverse the membrane as a helical segment. The segment at 36–64 (SNKPEIPPHRDNNAQWDDDDDWPDKDKKK) is disordered.

The protein belongs to the UPF0370 family.

It localises to the cell membrane. The protein is UPF0370 protein YE1145 of Yersinia enterocolitica serotype O:8 / biotype 1B (strain NCTC 13174 / 8081).